Here is a 269-residue protein sequence, read N- to C-terminus: Ribosomal RNA small subunit methyltransferase J (269 aa).

S-adenosyl-L-methionine contacts are provided by residues 125-126 (ER) and Asp-179.

This sequence belongs to the methyltransferase superfamily. RsmJ family.

Its subcellular location is the cytoplasm. It carries out the reaction guanosine(1516) in 16S rRNA + S-adenosyl-L-methionine = N(2)-methylguanosine(1516) in 16S rRNA + S-adenosyl-L-homocysteine + H(+). Its function is as follows. Specifically methylates the guanosine in position 1516 of 16S rRNA. The polypeptide is Ribosomal RNA small subunit methyltransferase J (Pseudomonas savastanoi pv. phaseolicola (strain 1448A / Race 6) (Pseudomonas syringae pv. phaseolicola (strain 1448A / Race 6))).